Consider the following 293-residue polypeptide: Protease HtpX (293 aa).

2 consecutive transmembrane segments (helical) span residues 4–24 (IALFLLTNLAVMLVFGLVLSL) and 34–54 (GLMIMAGLFGFGGAFVSLLMS). A Zn(2+)-binding site is contributed by His139. Residue Glu140 is part of the active site. His143 is a Zn(2+) binding site. Transmembrane regions (helical) follow at residues 158 to 178 (IVNTFVIFISRLIAQVAAGFL) and 193 to 213 (MVYFAVSMVLELVFGILASII). Position 222 (Glu222) interacts with Zn(2+).

Belongs to the peptidase M48B family. Zn(2+) is required as a cofactor.

It localises to the cell inner membrane. The polypeptide is Protease HtpX (Yersinia enterocolitica serotype O:8 / biotype 1B (strain NCTC 13174 / 8081)).